The primary structure comprises 297 residues: Pyridoxal 5'-phosphate synthase subunit PdxS (297 aa).

D-ribose 5-phosphate is bound at residue Asp-27. Catalysis depends on Lys-84, which acts as the Schiff-base intermediate with D-ribose 5-phosphate. A D-ribose 5-phosphate-binding site is contributed by Gly-156. Residue Arg-168 coordinates D-glyceraldehyde 3-phosphate. D-ribose 5-phosphate contacts are provided by residues Gly-217 and 238 to 239 (GS).

Belongs to the PdxS/SNZ family. As to quaternary structure, in the presence of PdxT, forms a dodecamer of heterodimers.

It carries out the reaction aldehydo-D-ribose 5-phosphate + D-glyceraldehyde 3-phosphate + L-glutamine = pyridoxal 5'-phosphate + L-glutamate + phosphate + 3 H2O + H(+). It participates in cofactor biosynthesis; pyridoxal 5'-phosphate biosynthesis. Catalyzes the formation of pyridoxal 5'-phosphate from ribose 5-phosphate (RBP), glyceraldehyde 3-phosphate (G3P) and ammonia. The ammonia is provided by the PdxT subunit. Can also use ribulose 5-phosphate and dihydroxyacetone phosphate as substrates, resulting from enzyme-catalyzed isomerization of RBP and G3P, respectively. This is Pyridoxal 5'-phosphate synthase subunit PdxS from Corynebacterium diphtheriae (strain ATCC 700971 / NCTC 13129 / Biotype gravis).